A 338-amino-acid polypeptide reads, in one-letter code: Putative peptide import ATP-binding protein BOV_A0348 (338 aa).

In terms of domain architecture, ABC transporter spans 10–263 (KGLRTVFRTR…PRHPYTMGLL (254 aa)). 43-50 (GESGSGKS) serves as a coordination point for ATP.

This sequence belongs to the ABC transporter superfamily. As to quaternary structure, the complex is composed of two ATP-binding proteins (BOV_A0347 and BOV_A0348), two transmembrane proteins (BOV_A0350 and BOV_A0351) and a solute-binding protein (BOV_A0352).

The protein resides in the cell inner membrane. Its function is as follows. Probably part of an ABC transporter complex that could be involved in peptide import. Probably responsible for energy coupling to the transport system. The protein is Putative peptide import ATP-binding protein BOV_A0348 of Brucella ovis (strain ATCC 25840 / 63/290 / NCTC 10512).